A 336-amino-acid chain; its full sequence is Large ribosomal subunit protein uL1 (336 aa).

Positions 1–245 are large ribosomal subunit protein uL1; the sequence is MANQKKVTNK…VKKTAKGKVI (245 aa). Positions 246–336 are unknown; sequence ADDSAKGENK…DVKKAKTSKK (91 aa). The segment at 267–336 is disordered; sequence AQKKKPSKHP…DVKKAKTSKK (70 aa). Over residues 286–305 the composition is skewed to basic residues; it reads KKKKVKKILKKAKPAKKAAV. The segment covering 306 to 315 has biased composition (low complexity); sequence AKKPVVVNKK.

The protein belongs to the universal ribosomal protein uL1 family. In terms of assembly, part of the 50S ribosomal subunit.

In terms of biological role, binds directly to 23S rRNA. The L1 stalk is quite mobile in the ribosome, and is involved in E site tRNA release. Functionally, protein L1 is also a translational repressor protein, it controls the translation of the L11 operon by binding to its mRNA. The protein is Large ribosomal subunit protein uL1 of Malacoplasma penetrans (strain HF-2) (Mycoplasma penetrans).